A 202-amino-acid chain; its full sequence is Na(+)-translocating NADH-quinone reductase subunit E (202 aa).

Transmembrane regions (helical) follow at residues 11-31 (SIFI…YLAV), 39-59 (MGLG…NNLL), 79-99 (LTFV…QILE), 114-134 (GIFL…LFMV), 144-164 (VTFG…LAGI), and 180-200 (LGIT…FSGI).

It belongs to the NqrDE/RnfAE family. Composed of six subunits; NqrA, NqrB, NqrC, NqrD, NqrE and NqrF.

Its subcellular location is the cell inner membrane. It carries out the reaction a ubiquinone + n Na(+)(in) + NADH + H(+) = a ubiquinol + n Na(+)(out) + NAD(+). Its function is as follows. NQR complex catalyzes the reduction of ubiquinone-1 to ubiquinol by two successive reactions, coupled with the transport of Na(+) ions from the cytoplasm to the periplasm. NqrA to NqrE are probably involved in the second step, the conversion of ubisemiquinone to ubiquinol. This is Na(+)-translocating NADH-quinone reductase subunit E from Maridesulfovibrio salexigens (strain ATCC 14822 / DSM 2638 / NCIMB 8403 / VKM B-1763) (Desulfovibrio salexigens).